The following is a 342-amino-acid chain: Phosphate acyltransferase (342 aa).

Belongs to the PlsX family. As to quaternary structure, homodimer. Probably interacts with PlsY.

Its subcellular location is the cytoplasm. It carries out the reaction a fatty acyl-[ACP] + phosphate = an acyl phosphate + holo-[ACP]. The protein operates within lipid metabolism; phospholipid metabolism. Functionally, catalyzes the reversible formation of acyl-phosphate (acyl-PO(4)) from acyl-[acyl-carrier-protein] (acyl-ACP). This enzyme utilizes acyl-ACP as fatty acyl donor, but not acyl-CoA. This is Phosphate acyltransferase from Shewanella halifaxensis (strain HAW-EB4).